Consider the following 699-residue polypeptide: Protein phosphatase 1 regulatory subunit 37 (699 aa).

Positions 1–12 are enriched in pro residues; it reads MEIPPQEAPPGP. A disordered region spans residues 1-42; the sequence is MEIPPQEAPPGPGADGEAEEAPVEAPSPGPASPPADGRLKAA. 2 positions are modified to phosphoserine: S50 and S56. LRR repeat units lie at residues 220–240, 248–269, 277–297, 306–326, and 334–354; these read SLAV…MLLA, TLRE…AQLG, SLQI…AYIC, GLAT…AFLG, and SLET…RNLK. Positions 467–667 are disordered; that stretch reads RLQLSASMPE…PPGPEAKVGS (201 aa). Residues 510-525 show a composition bias toward acidic residues; the sequence is SDSDSDSEGEDRDEAD. Position 566 is a phosphoserine (S566). Composition is skewed to pro residues over residues 588 to 613 and 622 to 642; these read PPVP…PFPT and DPGP…PPLP.

This sequence belongs to the PPP1R37 family. Interacts with PPP1CA.

Functionally, inhibits phosphatase activity of protein phosphatase 1 (PP1) complexes. This is Protein phosphatase 1 regulatory subunit 37 (PPP1R37) from Bos taurus (Bovine).